The primary structure comprises 94 residues: Phormicin (94 aa).

Residues 1 to 23 (MKFFMVFVVTFCLAVCFVSQSLA) form the signal peptide. Positions 24 to 54 (IPADAANDAHFVDGVQALKEIEPELHGRYKR) are excised as a propeptide. 3 disulfides stabilise this stretch: Cys57-Cys84, Cys70-Cys90, and Cys74-Cys92.

This sequence belongs to the invertebrate defensin family. Type 1 subfamily.

The protein resides in the secreted. Responsible for the anti Gram-positive activity of immune hemolymph of P.terraenovae. The polypeptide is Phormicin (Protophormia terraenovae (Northern blowfly)).